A 287-amino-acid chain; its full sequence is Large ribosomal subunit protein uL2 (287 aa).

The tract at residues 221 to 287 is disordered; sequence RGSVMNPCDH…SKRSRGGRDS (67 aa). Residues 258–287 are compositionally biased toward basic residues; the sequence is KTRKKNKPSNKLVVRRRRRISKRSRGGRDS.

The protein belongs to the universal ribosomal protein uL2 family. In terms of assembly, part of the 50S ribosomal subunit. Forms a bridge to the 30S subunit in the 70S ribosome.

Its function is as follows. One of the primary rRNA binding proteins. Required for association of the 30S and 50S subunits to form the 70S ribosome, for tRNA binding and peptide bond formation. It has been suggested to have peptidyltransferase activity; this is somewhat controversial. Makes several contacts with the 16S rRNA in the 70S ribosome. The protein is Large ribosomal subunit protein uL2 of Prochlorococcus marinus (strain MIT 9312).